The primary structure comprises 327 residues: Delta(3,5)-Delta(2,4)-dienoyl-CoA isomerase, mitochondrial (327 aa).

A mitochondrion-targeting transit peptide spans 1-33; the sequence is MATAMTVSSKLLGLLMQQLRGTRQLYFNVSLRS. Substrate is bound by residues 115 to 119 and G173; that span reads SGIDL. The residue at position 230 (K230) is an N6-succinyllysine. S267 carries the post-translational modification Phosphoserine. Residue K316 is modified to N6-succinyllysine. The Microbody targeting signal motif lies at 325-327; it reads SKL. The residue at position 326 (K326) is an N6-acetyllysine.

This sequence belongs to the enoyl-CoA hydratase/isomerase family. In terms of assembly, homohexamer. In terms of tissue distribution, expressed in heart and liver (at protein level).

The protein localises to the mitochondrion. It localises to the peroxisome. It catalyses the reaction (3E,5Z)-octadienoyl-CoA = (2E,4E)-octadienoyl-CoA. The catalysed reaction is (3E,5Z,8Z,11Z,14Z)-eicosapentaenoyl-CoA = (2E,4E,8Z,11Z,14Z)-eicosapentaenoyl-CoA. It functions in the pathway lipid metabolism; fatty acid beta-oxidation. Its function is as follows. Isomerization of 3-trans,5-cis-dienoyl-CoA to 2-trans,4-trans-dienoyl-CoA. The polypeptide is Delta(3,5)-Delta(2,4)-dienoyl-CoA isomerase, mitochondrial (Rattus norvegicus (Rat)).